The following is a 430-amino-acid chain: Enolase (430 aa).

Residue glutamine 167 participates in (2R)-2-phosphoglycerate binding. Glutamate 209 acts as the Proton donor in catalysis. The Mg(2+) site is built by aspartate 246, glutamate 289, and aspartate 316. Positions 341, 370, 371, and 392 each coordinate (2R)-2-phosphoglycerate. Catalysis depends on lysine 341, which acts as the Proton acceptor.

Belongs to the enolase family. Component of the RNA degradosome, a multiprotein complex involved in RNA processing and mRNA degradation. Mg(2+) is required as a cofactor.

Its subcellular location is the cytoplasm. The protein resides in the secreted. It localises to the cell surface. It catalyses the reaction (2R)-2-phosphoglycerate = phosphoenolpyruvate + H2O. It participates in carbohydrate degradation; glycolysis; pyruvate from D-glyceraldehyde 3-phosphate: step 4/5. In terms of biological role, catalyzes the reversible conversion of 2-phosphoglycerate (2-PG) into phosphoenolpyruvate (PEP). It is essential for the degradation of carbohydrates via glycolysis. This Idiomarina loihiensis (strain ATCC BAA-735 / DSM 15497 / L2-TR) protein is Enolase.